We begin with the raw amino-acid sequence, 306 residues long: MFLAQPRGFCAGVVRAIEIVERALEKYGPPVYVRHEIVHNKYVVESLKAKGAIFVEELSEVPPKAVTVFSAHGVARSIEEEAAARDLPVLNATCPLVTKVHNQGKRYTSKGRTLILIGHAGHPEVEGTMGQVPGPVLLVQNLDDVAALTLPPETPVAYITQTTLSVDDTKDIIVALSKKFHDIEGPDTRDICYATQNRQSAVRQMSKLVDLILVVGANNSSNSNRLREIGTEAGIPSYLIADGSELDPAWLDGKKAVGITAGASAPEVLVDDVIEALRRIVPVTVSVLPGREENIEFVLPAELATA.

Cys-10 contacts [4Fe-4S] cluster. Residues His-39 and His-72 each coordinate (2E)-4-hydroxy-3-methylbut-2-enyl diphosphate. 2 residues coordinate dimethylallyl diphosphate: His-39 and His-72. Isopentenyl diphosphate is bound by residues His-39 and His-72. Cys-94 provides a ligand contact to [4Fe-4S] cluster. His-122 is a binding site for (2E)-4-hydroxy-3-methylbut-2-enyl diphosphate. His-122 contacts dimethylallyl diphosphate. His-122 contributes to the isopentenyl diphosphate binding site. Glu-124 serves as the catalytic Proton donor. Thr-162 serves as a coordination point for (2E)-4-hydroxy-3-methylbut-2-enyl diphosphate. Cys-192 is a [4Fe-4S] cluster binding site. 4 residues coordinate (2E)-4-hydroxy-3-methylbut-2-enyl diphosphate: Ser-220, Ser-221, Asn-222, and Ser-264. Positions 220, 221, 222, and 264 each coordinate dimethylallyl diphosphate. Isopentenyl diphosphate-binding residues include Ser-220, Ser-221, Asn-222, and Ser-264.

Belongs to the IspH family. The cofactor is [4Fe-4S] cluster.

It carries out the reaction isopentenyl diphosphate + 2 oxidized [2Fe-2S]-[ferredoxin] + H2O = (2E)-4-hydroxy-3-methylbut-2-enyl diphosphate + 2 reduced [2Fe-2S]-[ferredoxin] + 2 H(+). The catalysed reaction is dimethylallyl diphosphate + 2 oxidized [2Fe-2S]-[ferredoxin] + H2O = (2E)-4-hydroxy-3-methylbut-2-enyl diphosphate + 2 reduced [2Fe-2S]-[ferredoxin] + 2 H(+). It participates in isoprenoid biosynthesis; dimethylallyl diphosphate biosynthesis; dimethylallyl diphosphate from (2E)-4-hydroxy-3-methylbutenyl diphosphate: step 1/1. It functions in the pathway isoprenoid biosynthesis; isopentenyl diphosphate biosynthesis via DXP pathway; isopentenyl diphosphate from 1-deoxy-D-xylulose 5-phosphate: step 6/6. Catalyzes the conversion of 1-hydroxy-2-methyl-2-(E)-butenyl 4-diphosphate (HMBPP) into a mixture of isopentenyl diphosphate (IPP) and dimethylallyl diphosphate (DMAPP). Acts in the terminal step of the DOXP/MEP pathway for isoprenoid precursor biosynthesis. This chain is 4-hydroxy-3-methylbut-2-enyl diphosphate reductase 1, found in Rhodopseudomonas palustris (strain ATCC BAA-98 / CGA009).